Here is a 423-residue protein sequence, read N- to C-terminus: Type II methyltransferase M.NgoBV (423 aa).

Residues 4–423 (IKFIDLFSGM…AVSERLLHTL (420 aa)) form the SAM-dependent MTase C5-type domain. Residue C80 is part of the active site.

It belongs to the class I-like SAM-binding methyltransferase superfamily. C5-methyltransferase family.

The enzyme catalyses a 2'-deoxycytidine in DNA + S-adenosyl-L-methionine = a 5-methyl-2'-deoxycytidine in DNA + S-adenosyl-L-homocysteine + H(+). In terms of biological role, a methylase, recognizes the double-stranded sequence 5'-GGNNCC-3', methylates C-5 on both strands, and protects the DNA from cleavage by the NgoBV endonuclease. The polypeptide is Type II methyltransferase M.NgoBV (ngoBVM) (Neisseria gonorrhoeae).